The chain runs to 377 residues: UPF0754 membrane protein lmo2224 (377 aa).

Transmembrane regions (helical) follow at residues 1 to 21 (MSVL…GAMT) and 357 to 377 (YLGG…AMWI).

It belongs to the UPF0754 family.

The protein localises to the cell membrane. The protein is UPF0754 membrane protein lmo2224 of Listeria monocytogenes serovar 1/2a (strain ATCC BAA-679 / EGD-e).